Here is a 361-residue protein sequence, read N- to C-terminus: 3-dehydroquinate synthase (361 aa).

Residues 104–108 (GVIGD), 128–129 (TT), Lys-140, and Lys-149 contribute to the NAD(+) site. Residues Glu-182, His-245, and His-262 each coordinate Zn(2+).

It belongs to the sugar phosphate cyclases superfamily. Dehydroquinate synthase family. Requires NAD(+) as cofactor. It depends on Co(2+) as a cofactor. The cofactor is Zn(2+).

The protein localises to the cytoplasm. It carries out the reaction 7-phospho-2-dehydro-3-deoxy-D-arabino-heptonate = 3-dehydroquinate + phosphate. The protein operates within metabolic intermediate biosynthesis; chorismate biosynthesis; chorismate from D-erythrose 4-phosphate and phosphoenolpyruvate: step 2/7. Functionally, catalyzes the conversion of 3-deoxy-D-arabino-heptulosonate 7-phosphate (DAHP) to dehydroquinate (DHQ). The chain is 3-dehydroquinate synthase from Halalkalibacterium halodurans (strain ATCC BAA-125 / DSM 18197 / FERM 7344 / JCM 9153 / C-125) (Bacillus halodurans).